We begin with the raw amino-acid sequence, 249 residues long: MTRYKAIISYDGTLFSGFQRQSQARTVQEEIEKTLQKLTGGQGIQIHGAGITDAGVHAYGQVIHFDLEQKRDPEKLRFALDTQTPDDIDVISLEIAADDFHARYHKHFKTYEFLVDIGRPKNPMMRHYATHYPYPLDIAKMQAAIKDLVGTHDFTGFTAAGTSVKNKVRTITAATLTQDPKTGFLVFTFSGNGFLYKQVRNMVGTLLKIGNGRLPIEQIRLVLESKNRQLAGPTAAGNGLYLKEIIYEE.

The active-site Nucleophile is D53. Y111 provides a ligand contact to substrate.

Belongs to the tRNA pseudouridine synthase TruA family. Homodimer.

The enzyme catalyses uridine(38/39/40) in tRNA = pseudouridine(38/39/40) in tRNA. Its function is as follows. Formation of pseudouridine at positions 38, 39 and 40 in the anticodon stem and loop of transfer RNAs. In Streptococcus equi subsp. zooepidemicus (strain MGCS10565), this protein is tRNA pseudouridine synthase A.